We begin with the raw amino-acid sequence, 49 residues long: DNA-directed RNA polymerase subunit Rpo12 (49 aa).

Zn(2+)-binding residues include C11, C27, and C30.

This sequence belongs to the archaeal Rpo12/eukaryotic RPC10 RNA polymerase subunit family. Part of the RNA polymerase complex. Requires Zn(2+) as cofactor.

It is found in the cytoplasm. Its subcellular location is the chromosome. It carries out the reaction RNA(n) + a ribonucleoside 5'-triphosphate = RNA(n+1) + diphosphate. In terms of biological role, DNA-dependent RNA polymerase (RNAP) catalyzes the transcription of DNA into RNA using the four ribonucleoside triphosphates as substrates. The sequence is that of DNA-directed RNA polymerase subunit Rpo12 from Thermococcus kodakarensis (strain ATCC BAA-918 / JCM 12380 / KOD1) (Pyrococcus kodakaraensis (strain KOD1)).